Reading from the N-terminus, the 396-residue chain is Phosphoglycerate kinase (396 aa).

Substrate-binding positions include aspartate 21–asparagine 23, arginine 36, histidine 59–arginine 62, arginine 118, and arginine 151. Residues lysine 201, glycine 292, glutamate 323, and glycine 349–serine 352 contribute to the ATP site.

It belongs to the phosphoglycerate kinase family. As to quaternary structure, monomer.

The protein resides in the cytoplasm. It carries out the reaction (2R)-3-phosphoglycerate + ATP = (2R)-3-phospho-glyceroyl phosphate + ADP. It functions in the pathway carbohydrate degradation; glycolysis; pyruvate from D-glyceraldehyde 3-phosphate: step 2/5. The chain is Phosphoglycerate kinase from Leptospira interrogans serogroup Icterohaemorrhagiae serovar Lai (strain 56601).